Reading from the N-terminus, the 191-residue chain is Putative zinc metalloprotease MJ0611 (191 aa).

A helical membrane pass occupies residues 20–40 (AIAFIFSYPNFSILVFIISLI). A Zn(2+)-binding site is contributed by H49. The active site involves E50. Residue H53 coordinates Zn(2+). 4 helical membrane passes run 73–93 (LILG…PGAV), 110–130 (LAGP…MLIF), 133–153 (GSLL…LAGF), and 171–191 (PFIW…MMFW).

The protein belongs to the peptidase M50B family. The cofactor is Zn(2+).

Its subcellular location is the cell membrane. The sequence is that of Putative zinc metalloprotease MJ0611 from Methanocaldococcus jannaschii (strain ATCC 43067 / DSM 2661 / JAL-1 / JCM 10045 / NBRC 100440) (Methanococcus jannaschii).